Reading from the N-terminus, the 131-residue chain is Peptide methionine sulfoxide reductase MsrB (131 aa).

Positions 8-130 (LEEWKQMLDP…NSVCLDLVPR (123 aa)) constitute a MsrB domain. Residues Cys47, Cys50, Cys96, and Cys99 each coordinate Zn(2+). The active-site Nucleophile is Cys119.

The protein belongs to the MsrB Met sulfoxide reductase family. Zn(2+) is required as a cofactor.

It catalyses the reaction L-methionyl-[protein] + [thioredoxin]-disulfide + H2O = L-methionyl-(R)-S-oxide-[protein] + [thioredoxin]-dithiol. The chain is Peptide methionine sulfoxide reductase MsrB from Pseudomonas syringae pv. syringae (strain B728a).